A 418-amino-acid chain; its full sequence is UDP-N-acetylglucosamine 1-carboxyvinyltransferase (418 aa).

22-23 is a binding site for phosphoenolpyruvate; it reads KN. A UDP-N-acetyl-alpha-D-glucosamine-binding site is contributed by Arg-92. The active-site Proton donor is the Cys-116. Cys-116 carries the post-translational modification 2-(S-cysteinyl)pyruvic acid O-phosphothioketal. UDP-N-acetyl-alpha-D-glucosamine-binding positions include 121–125, Asp-306, and Ile-328; that span reads RPVDQ.

This sequence belongs to the EPSP synthase family. MurA subfamily.

The protein localises to the cytoplasm. The enzyme catalyses phosphoenolpyruvate + UDP-N-acetyl-alpha-D-glucosamine = UDP-N-acetyl-3-O-(1-carboxyvinyl)-alpha-D-glucosamine + phosphate. Its pathway is cell wall biogenesis; peptidoglycan biosynthesis. Cell wall formation. Adds enolpyruvyl to UDP-N-acetylglucosamine. This Acinetobacter baylyi (strain ATCC 33305 / BD413 / ADP1) protein is UDP-N-acetylglucosamine 1-carboxyvinyltransferase.